The primary structure comprises 273 residues: MAIVKCKPTSAGRRHVVKIVNPELHKGKPYAPLLGTKSKTGGRNNLGRITTRHIGGGHKQHYRVIDFKRNKLDIPAVVERLEYDPNRSANIALVLYKDGERRYILAPKGLSAGDQIQSGINAPIKIGNSLPMRNIPVGSTVHNVELKPGKGGQIARSAGAYVQIIAREGNYVTLRLRSGEMRKVLSECVATIGEVGNSEHMLRVLGKAGANRWRGVRPTVRGTAMNPVDHPHGGGEGRNFGKHPVTPWGVQTKGKKTRHNKRTDKYIVRRRGK.

Residues 221-263 (RGTAMNPVDHPHGGGEGRNFGKHPVTPWGVQTKGKKTRHNKRT) are disordered. The span at 253 to 263 (KGKKTRHNKRT) shows a compositional bias: basic residues.

Belongs to the universal ribosomal protein uL2 family. Part of the 50S ribosomal subunit. Forms a bridge to the 30S subunit in the 70S ribosome.

One of the primary rRNA binding proteins. Required for association of the 30S and 50S subunits to form the 70S ribosome, for tRNA binding and peptide bond formation. It has been suggested to have peptidyltransferase activity; this is somewhat controversial. Makes several contacts with the 16S rRNA in the 70S ribosome. The protein is Large ribosomal subunit protein uL2 of Histophilus somni (strain 2336) (Haemophilus somnus).